A 246-amino-acid chain; its full sequence is 2-deoxyglucose-6-phosphate phosphatase 2 (246 aa).

D83 acts as the Nucleophile in catalysis. Mg(2+) is bound at residue D83. Substrate-binding positions include D83, E92, and 146-149; that span reads DVKN. Position 183 (D183) interacts with Mg(2+).

The protein belongs to the HAD-like hydrolase superfamily. DOG/GPP family. It depends on Mg(2+) as a cofactor.

The enzyme catalyses 2-deoxy-D-glucose 6-phosphate + H2O = 2-deoxy-D-glucose + phosphate. In terms of biological role, phosphatase that is active on 2-deoxy-D-glucose 6-phosphate (2-DOG-6P), but not very active on fructose-1-P. The chain is 2-deoxyglucose-6-phosphate phosphatase 2 from Saccharomyces cerevisiae (strain ATCC 204508 / S288c) (Baker's yeast).